A 481-amino-acid chain; its full sequence is Protein nucleotidyltransferase YdiU (481 aa).

Residues Gly85, Gly87, Arg88, Lys108, Asp120, Gly121, Arg172, and Arg179 each coordinate ATP. The Proton acceptor role is filled by Asp248. Mg(2+)-binding residues include Asn249 and Asp258. Asp258 contributes to the ATP binding site.

The protein belongs to the SELO family. Mg(2+) serves as cofactor. The cofactor is Mn(2+).

The catalysed reaction is L-seryl-[protein] + ATP = 3-O-(5'-adenylyl)-L-seryl-[protein] + diphosphate. It catalyses the reaction L-threonyl-[protein] + ATP = 3-O-(5'-adenylyl)-L-threonyl-[protein] + diphosphate. It carries out the reaction L-tyrosyl-[protein] + ATP = O-(5'-adenylyl)-L-tyrosyl-[protein] + diphosphate. The enzyme catalyses L-histidyl-[protein] + UTP = N(tele)-(5'-uridylyl)-L-histidyl-[protein] + diphosphate. The catalysed reaction is L-seryl-[protein] + UTP = O-(5'-uridylyl)-L-seryl-[protein] + diphosphate. It catalyses the reaction L-tyrosyl-[protein] + UTP = O-(5'-uridylyl)-L-tyrosyl-[protein] + diphosphate. In terms of biological role, nucleotidyltransferase involved in the post-translational modification of proteins. It can catalyze the addition of adenosine monophosphate (AMP) or uridine monophosphate (UMP) to a protein, resulting in modifications known as AMPylation and UMPylation. The protein is Protein nucleotidyltransferase YdiU of Cereibacter sphaeroides (strain ATCC 17023 / DSM 158 / JCM 6121 / CCUG 31486 / LMG 2827 / NBRC 12203 / NCIMB 8253 / ATH 2.4.1.) (Rhodobacter sphaeroides).